The chain runs to 128 residues: uncharacterized protein (128 aa).

2 helical membrane passes run 45-65 (GYFHWSLITQNYIIFLFLFPF) and 95-115 (FMSHIPVLTVISYCVCCLSCF).

It localises to the membrane. This is an uncharacterized protein from Saccharomyces cerevisiae (strain ATCC 204508 / S288c) (Baker's yeast).